We begin with the raw amino-acid sequence, 417 residues long: Phosphoglycerate kinase (417 aa).

Positions 23, 24, 25, 26, 39, 40, 63, 64, 66, 67, 122, 123, 170, and 171 each coordinate (2R)-3-phosphoglycerate. G214 provides a ligand contact to ADP. Position 214 (G214) interacts with CDP. 2 residues coordinate AMP: A215 and K216. Position 215 (A215) interacts with ATP. A215 lines the Mg(2+) pocket. D219 serves as a coordination point for CDP. D219 is a binding site for Mg(2+). K220 contacts AMP. Position 220 (K220) interacts with ATP. G238 contacts ADP. Residue G238 participates in CDP binding. The AMP site is built by G239 and G313. The ATP site is built by G239 and G313. Positions 338 and 343 each coordinate CDP. F343 contributes to the ADP binding site. E344 is a binding site for AMP. The ATP site is built by E344, D375, and T376. D375 is a binding site for Mg(2+).

Belongs to the phosphoglycerate kinase family. As to quaternary structure, monomer. The cofactor is Mg(2+).

It localises to the cytoplasm. It is found in the mitochondrion. It carries out the reaction (2R)-3-phosphoglycerate + ATP = (2R)-3-phospho-glyceroyl phosphate + ADP. The protein operates within carbohydrate degradation; glycolysis; pyruvate from D-glyceraldehyde 3-phosphate: step 2/5. Its function is as follows. Catalyzes one of the two ATP producing reactions in the glycolytic pathway via the reversible conversion of 1,3-diphosphoglycerate to 3-phosphoglycerate. Both L- and D- forms of purine and pyrimidine nucleotides can be used as substrates, but the activity is much lower on pyrimidines. Negatively regulates the biosynthesis of acetyl-CoA from pyruvate in the mitochondrion. This is Phosphoglycerate kinase (PGKA) from Penicillium citrinum.